A 312-amino-acid polypeptide reads, in one-letter code: Tetraacyldisaccharide 4'-kinase (312 aa).

60 to 67 is an ATP binding site; that stretch reads IAGGSGKT.

Belongs to the LpxK family.

The catalysed reaction is a lipid A disaccharide + ATP = a lipid IVA + ADP + H(+). Its pathway is glycolipid biosynthesis; lipid IV(A) biosynthesis; lipid IV(A) from (3R)-3-hydroxytetradecanoyl-[acyl-carrier-protein] and UDP-N-acetyl-alpha-D-glucosamine: step 6/6. Transfers the gamma-phosphate of ATP to the 4'-position of a tetraacyldisaccharide 1-phosphate intermediate (termed DS-1-P) to form tetraacyldisaccharide 1,4'-bis-phosphate (lipid IVA). The sequence is that of Tetraacyldisaccharide 4'-kinase from Helicobacter pylori (strain J99 / ATCC 700824) (Campylobacter pylori J99).